The primary structure comprises 315 residues: Olfactory receptor 8J3 (315 aa).

At 1-25 the chain is on the extracellular side; it reads MAPENFTRVTEFILTGVSSCPELQI. N-linked (GlcNAc...) asparagine glycosylation is present at asparagine 5. The helical transmembrane segment at 26-46 threads the bilayer; sequence PLFLVFLVLYVLTMAGNLGII. The Cytoplasmic segment spans residues 47–54; the sequence is TLTSVDSR. Residues 55–75 traverse the membrane as a helical segment; sequence LQNPMYFFLRHLAIINLGNST. Over 76–99 the chain is Extracellular; that stretch reads VIAPKMLMNFLVKKKTTSFYECAT. Cysteine 97 and cysteine 189 are oxidised to a cystine. Residues 100–120 traverse the membrane as a helical segment; the sequence is QLGGFLFFIVSEVMMLAVMAY. Topologically, residues 121 to 139 are cytoplasmic; the sequence is DRYVAICNPLLYMVVVSRR. Residues 140-160 form a helical membrane-spanning segment; the sequence is LCLLLVSLTYLYGFSTAIVVS. At 161-197 the chain is on the extracellular side; that stretch reads PCIFSVSYCSSNIINHFYCDIAPLLALSCSDTYIPET. Residues 198-217 traverse the membrane as a helical segment; it reads IVFISAATNLVFSMITVLVS. At 218–237 the chain is on the cytoplasmic side; the sequence is YFNIVLSILRIRSPEGRKKA. The helical transmembrane segment at 238 to 258 threads the bilayer; it reads FSTCASHMIAVTVFYGTMLFM. Residues 259 to 271 are Extracellular-facing; the sequence is YLQPQTNHSLDTD. Residue asparagine 265 is glycosylated (N-linked (GlcNAc...) asparagine). A helical transmembrane segment spans residues 272-292; that stretch reads KMASVFYTLVIPMLNPLIYSL. At 293-315 the chain is on the cytoplasmic side; the sequence is RNNDVNVALKKFMENPCYSFKSM.

This sequence belongs to the G-protein coupled receptor 1 family.

It localises to the cell membrane. Functionally, odorant receptor. The protein is Olfactory receptor 8J3 (OR8J3) of Homo sapiens (Human).